The following is a 96-amino-acid chain: Co-chaperonin GroES (96 aa).

The protein belongs to the GroES chaperonin family. In terms of assembly, heptamer of 7 subunits arranged in a ring. Interacts with the chaperonin GroEL.

Its subcellular location is the cytoplasm. Functionally, together with the chaperonin GroEL, plays an essential role in assisting protein folding. The GroEL-GroES system forms a nano-cage that allows encapsulation of the non-native substrate proteins and provides a physical environment optimized to promote and accelerate protein folding. GroES binds to the apical surface of the GroEL ring, thereby capping the opening of the GroEL channel. The sequence is that of Co-chaperonin GroES from Nitrosospira multiformis (strain ATCC 25196 / NCIMB 11849 / C 71).